Here is a 352-residue protein sequence, read N- to C-terminus: S-adenosylmethionine:tRNA ribosyltransferase-isomerase (352 aa).

This sequence belongs to the QueA family. Monomer.

The protein resides in the cytoplasm. It carries out the reaction 7-aminomethyl-7-carbaguanosine(34) in tRNA + S-adenosyl-L-methionine = epoxyqueuosine(34) in tRNA + adenine + L-methionine + 2 H(+). It functions in the pathway tRNA modification; tRNA-queuosine biosynthesis. Its function is as follows. Transfers and isomerizes the ribose moiety from AdoMet to the 7-aminomethyl group of 7-deazaguanine (preQ1-tRNA) to give epoxyqueuosine (oQ-tRNA). In Paraburkholderia phytofirmans (strain DSM 17436 / LMG 22146 / PsJN) (Burkholderia phytofirmans), this protein is S-adenosylmethionine:tRNA ribosyltransferase-isomerase.